The following is a 258-amino-acid chain: Small ribosomal subunit protein uS2 (258 aa).

The disordered stretch occupies residues 222 to 258; sequence GKALRDQDEAEQVEPVSQEEKDEVVAEAMSEADFEEQ.

The protein belongs to the universal ribosomal protein uS2 family.

The sequence is that of Small ribosomal subunit protein uS2 from Campylobacter fetus subsp. fetus (strain 82-40).